We begin with the raw amino-acid sequence, 328 residues long: Radiation response metalloprotease IrrE (328 aa).

A disordered region spans residues 1–31 (MPSANVSPPCPSGVRGGGMGPKAKAEASKPH). Position 118 (His-118) interacts with Zn(2+). Glu-119 is an active-site residue. Positions 122 and 149 each coordinate Zn(2+). Disordered stretches follow at residues 217-238 (PREQ…LTVR) and 309-328 (RLGR…DAAQ).

In terms of biological role, plays a central regulatory role in DNA repair and protection pathways in response to radiation stress. Acts as a site-specific metalloprotease that cleaves and inactivates the repressor protein DdrO, resulting in induced expression of genes required for DNA repair and cell survival after exposure to radiation. Regulates the expression of dozens of proteins from different pathways, including the important DNA repair proteins RecA and PprA. Binds to the promoters of recA and pprA. This is Radiation response metalloprotease IrrE from Deinococcus radiodurans (strain ATCC 13939 / DSM 20539 / JCM 16871 / CCUG 27074 / LMG 4051 / NBRC 15346 / NCIMB 9279 / VKM B-1422 / R1).